The sequence spans 317 residues: UV DNA damage endonuclease (317 aa).

Belongs to the uve1/UvsE family.

Component in a DNA repair pathway. Removal of UV LIGHT damaged nucleotides. Recognizes pyrimidine dimers and cleave a phosphodiester bond immediately 5' to the lesion. The chain is UV DNA damage endonuclease from Bacillus cereus (strain B4264).